Here is a 719-residue protein sequence, read N- to C-terminus: Protein psiJ (719 aa).

A signal peptide spans 1-21 (MVSNLLKGLILFSLFISFLNG). Topologically, residues 22–653 (DDKIFPVTIR…RCQSVAVKAG (632 aa)) are extracellular. 10 N-linked (GlcNAc...) asparagine glycosylation sites follow: N46, N59, N86, N113, N301, N372, N435, N457, N562, and N628. One can recognise a PA14 domain in the interval 112–260 (QNQTDPRVFY…KDYCGVCEGT (149 aa)). Residues 654 to 674 (VIGGAAIAGVVVGGAVALGLA) form a helical membrane-spanning segment. The Cytoplasmic portion of the chain corresponds to 675 to 719 (LFGAKAGYNHWMSLKNNQMATSSVNPLYEPSPHQGTNPLWEAPPT).

Belongs to the prespore-cell-inducing factor family.

The protein localises to the membrane. In Dictyostelium discoideum (Social amoeba), this protein is Protein psiJ (psiJ).